Here is a 603-residue protein sequence, read N- to C-terminus: UvrABC system protein C (603 aa).

Residues 15–92 (DQPGCYLMKD…IKKHDPRFNI (78 aa)) enclose the GIY-YIG domain. The region spanning 197-232 (KTVKNDLMKKMQEAAENMEFEKAGEFRDQINAIETT) is the UVR domain.

It belongs to the UvrC family. As to quaternary structure, interacts with UvrB in an incision complex.

Its subcellular location is the cytoplasm. Its function is as follows. The UvrABC repair system catalyzes the recognition and processing of DNA lesions. UvrC both incises the 5' and 3' sides of the lesion. The N-terminal half is responsible for the 3' incision and the C-terminal half is responsible for the 5' incision. This Listeria monocytogenes serotype 4b (strain F2365) protein is UvrABC system protein C.